Consider the following 498-residue polypeptide: Argininosuccinate lyase 1 (498 aa).

This sequence belongs to the lyase 1 family. Argininosuccinate lyase subfamily.

It is found in the cytoplasm. It carries out the reaction 2-(N(omega)-L-arginino)succinate = fumarate + L-arginine. It participates in amino-acid biosynthesis; L-arginine biosynthesis; L-arginine from L-ornithine and carbamoyl phosphate: step 3/3. This chain is Argininosuccinate lyase 1, found in Shouchella clausii (strain KSM-K16) (Alkalihalobacillus clausii).